A 406-amino-acid chain; its full sequence is Putative nickel insertion protein (406 aa).

This sequence belongs to the LarC family.

This is Putative nickel insertion protein from Methanosphaera stadtmanae (strain ATCC 43021 / DSM 3091 / JCM 11832 / MCB-3).